The following is a 588-amino-acid chain: Calcium/calmodulin-dependent protein kinase kinase 2 (588 aa).

The span at 1 to 14 shows a compositional bias: polar residues; the sequence is MSSCVSSQPSSNRA. 2 disordered regions span residues 1-33 and 78-100; these read MSSC…SQKP and GQEV…RKLS. At serine 2 the chain carries N-acetylserine. Phosphoserine is present on residues serine 100, serine 114, serine 129, serine 133, and serine 137. Low complexity predominate over residues 128–139; sequence YSPVSSPQSSPR. The tract at residues 128 to 149 is disordered; the sequence is YSPVSSPQSSPRLPRRPTVESH. In terms of domain architecture, Protein kinase spans 165–446; that stretch reads YTLKDEIGKG…VPEIKLHPWV (282 aa). ATP is bound by residues 171 to 179 and lysine 194; that span reads IGKGSYGVV. The RP domain stretch occupies residues 204-226; it reads QAGFPRRPPPRGTRPAPGGCIQP. The interval 205 to 225 is disordered; it reads AGFPRRPPPRGTRPAPGGCIQ. The Proton acceptor role is filled by aspartate 312. An autoinhibitory domain region spans residues 472–477; that stretch reads ENSVKH. Residues 475–500 are calmodulin-binding; it reads VKHIPSLATVILVKTMIRKRSFGNPF. Proline 479, serine 495, serine 511, threonine 522, and serine 572 each carry phosphoserine. The tract at residues 497–588 is disordered; that stretch reads GNPFEGSRRE…LRPEEAMEPE (92 aa). Residues 521–536 are compositionally biased toward basic and acidic residues; the sequence is PTRECESLSELKEARQ. Residues 579 to 588 show a composition bias toward basic and acidic residues; it reads LRPEEAMEPE.

Belongs to the protein kinase superfamily. Ser/Thr protein kinase family. As to quaternary structure, interacts with calmodulin. Autophosphorylated and phosphorylated by PKA. Each isoform may show a different pattern of phosphorylation. As to expression, ubiquitously expressed with higher levels in the brain. Intermediate levels are detected in spleen, prostate, thyroid and leukocytes. The lowest level is in lung.

It localises to the nucleus. Its subcellular location is the cytoplasm. The protein resides in the cell projection. It is found in the neuron projection. It catalyses the reaction L-seryl-[protein] + ATP = O-phospho-L-seryl-[protein] + ADP + H(+). The enzyme catalyses L-threonyl-[protein] + ATP = O-phospho-L-threonyl-[protein] + ADP + H(+). Activated by Ca(2+)/calmodulin. Binding of calmodulin may relieve intrasteric autoinhibition. Autophosphorylation does not alter activity or regulation by Ca(2+)/calmodulin. In part, activity is independent on Ca(2+)/calmodulin. Its function is as follows. Calcium/calmodulin-dependent protein kinase belonging to a proposed calcium-triggered signaling cascade involved in a number of cellular processes. Isoform 1, isoform 2 and isoform 3 phosphorylate CAMK1 and CAMK4. Isoform 3 phosphorylates CAMK1D. Isoform 4, isoform 5 and isoform 6 lacking part of the calmodulin-binding domain are inactive. Efficiently phosphorylates 5'-AMP-activated protein kinase (AMPK) trimer, including that consisting of PRKAA1, PRKAB1 and PRKAG1. This phosphorylation is stimulated in response to Ca(2+) signals. Seems to be involved in hippocampal activation of CREB1. May play a role in neurite growth. Isoform 3 may promote neurite elongation, while isoform 1 may promoter neurite branching. The protein is Calcium/calmodulin-dependent protein kinase kinase 2 (CAMKK2) of Homo sapiens (Human).